The following is a 406-amino-acid chain: 4-hydroxy-3-methylbut-2-en-1-yl diphosphate synthase (flavodoxin) (406 aa).

[4Fe-4S] cluster is bound by residues C297, C300, C343, and E350.

This sequence belongs to the IspG family. It depends on [4Fe-4S] cluster as a cofactor.

The enzyme catalyses (2E)-4-hydroxy-3-methylbut-2-enyl diphosphate + oxidized [flavodoxin] + H2O + 2 H(+) = 2-C-methyl-D-erythritol 2,4-cyclic diphosphate + reduced [flavodoxin]. The protein operates within isoprenoid biosynthesis; isopentenyl diphosphate biosynthesis via DXP pathway; isopentenyl diphosphate from 1-deoxy-D-xylulose 5-phosphate: step 5/6. Its function is as follows. Converts 2C-methyl-D-erythritol 2,4-cyclodiphosphate (ME-2,4cPP) into 1-hydroxy-2-methyl-2-(E)-butenyl 4-diphosphate. The protein is 4-hydroxy-3-methylbut-2-en-1-yl diphosphate synthase (flavodoxin) of Thermus thermophilus (strain ATCC 27634 / DSM 579 / HB8).